The following is a 103-amino-acid chain: Large ribosomal subunit protein bL21 (103 aa).

The protein belongs to the bacterial ribosomal protein bL21 family. As to quaternary structure, part of the 50S ribosomal subunit. Contacts protein L20.

Its function is as follows. This protein binds to 23S rRNA in the presence of protein L20. This Glaesserella parasuis serovar 5 (strain SH0165) (Haemophilus parasuis) protein is Large ribosomal subunit protein bL21.